The primary structure comprises 146 residues: Tol-Pal system protein TolR (146 aa).

Residues 16 to 36 (VVPYIDVMLVLLVIFMVTAPM) traverse the membrane as a helical segment.

This sequence belongs to the ExbD/TolR family. As to quaternary structure, the Tol-Pal system is composed of five core proteins: the inner membrane proteins TolA, TolQ and TolR, the periplasmic protein TolB and the outer membrane protein Pal. They form a network linking the inner and outer membranes and the peptidoglycan layer.

The protein localises to the cell inner membrane. Part of the Tol-Pal system, which plays a role in outer membrane invagination during cell division and is important for maintaining outer membrane integrity. This Pseudomonas aeruginosa (strain ATCC 15692 / DSM 22644 / CIP 104116 / JCM 14847 / LMG 12228 / 1C / PRS 101 / PAO1) protein is Tol-Pal system protein TolR.